A 338-amino-acid polypeptide reads, in one-letter code: Nicotinate-nucleotide--dimethylbenzimidazole phosphoribosyltransferase (338 aa).

E306 (proton acceptor) is an active-site residue.

This sequence belongs to the CobT family.

It catalyses the reaction 5,6-dimethylbenzimidazole + nicotinate beta-D-ribonucleotide = alpha-ribazole 5'-phosphate + nicotinate + H(+). It participates in nucleoside biosynthesis; alpha-ribazole biosynthesis; alpha-ribazole from 5,6-dimethylbenzimidazole: step 1/2. In terms of biological role, catalyzes the synthesis of alpha-ribazole-5'-phosphate from nicotinate mononucleotide (NAMN) and 5,6-dimethylbenzimidazole (DMB). In Cereibacter sphaeroides (strain ATCC 17023 / DSM 158 / JCM 6121 / CCUG 31486 / LMG 2827 / NBRC 12203 / NCIMB 8253 / ATH 2.4.1.) (Rhodobacter sphaeroides), this protein is Nicotinate-nucleotide--dimethylbenzimidazole phosphoribosyltransferase.